We begin with the raw amino-acid sequence, 404 residues long: Cysteine desulfurase IscS (404 aa).

Pyridoxal 5'-phosphate-binding positions include 75–76 (AT), asparagine 155, glutamine 183, and 203–205 (SGH). Lysine 206 carries the N6-(pyridoxal phosphate)lysine modification. Position 243 (threonine 243) interacts with pyridoxal 5'-phosphate. Cysteine 328 serves as the catalytic Cysteine persulfide intermediate. Cysteine 328 is a [2Fe-2S] cluster binding site.

This sequence belongs to the class-V pyridoxal-phosphate-dependent aminotransferase family. NifS/IscS subfamily. As to quaternary structure, homodimer. Forms a heterotetramer with IscU, interacts with other sulfur acceptors. Pyridoxal 5'-phosphate is required as a cofactor.

The protein localises to the cytoplasm. It carries out the reaction (sulfur carrier)-H + L-cysteine = (sulfur carrier)-SH + L-alanine. It participates in cofactor biosynthesis; iron-sulfur cluster biosynthesis. Its function is as follows. Master enzyme that delivers sulfur to a number of partners involved in Fe-S cluster assembly, tRNA modification or cofactor biosynthesis. Catalyzes the removal of elemental sulfur atoms from cysteine to produce alanine. Functions as a sulfur delivery protein for Fe-S cluster synthesis onto IscU, an Fe-S scaffold assembly protein, as well as other S acceptor proteins. The polypeptide is Cysteine desulfurase IscS (Shewanella baltica (strain OS223)).